The following is a 436-amino-acid chain: Hydrogenobyrinate a,c-diamide synthase (436 aa).

One can recognise a GATase cobBQ-type domain in the interval 244–435 (RIAVARDDAF…MHVIDFSGEA (192 aa)). Residue Cys-327 is the Nucleophile of the active site.

Belongs to the CobB/CbiA family. Requires Mg(2+) as cofactor.

The enzyme catalyses hydrogenobyrinate + 2 L-glutamine + 2 ATP + 2 H2O = hydrogenobyrinate a,c-diamide + 2 L-glutamate + 2 ADP + 2 phosphate + 2 H(+). It participates in cofactor biosynthesis; adenosylcobalamin biosynthesis; cob(II)yrinate a,c-diamide from precorrin-2 (aerobic route): step 9/10. Functionally, catalyzes the ATP-dependent amidation of the two carboxylate groups at positions a and c of hydrogenobyrinate, using either L-glutamine or ammonia as the nitrogen source. In Brucella abortus biovar 1 (strain 9-941), this protein is Hydrogenobyrinate a,c-diamide synthase.